The chain runs to 218 residues: Probable transaldolase (218 aa).

The active-site Schiff-base intermediate with substrate is Lys87.

It belongs to the transaldolase family. Type 3B subfamily.

The protein resides in the cytoplasm. The enzyme catalyses D-sedoheptulose 7-phosphate + D-glyceraldehyde 3-phosphate = D-erythrose 4-phosphate + beta-D-fructose 6-phosphate. Its pathway is carbohydrate degradation; pentose phosphate pathway; D-glyceraldehyde 3-phosphate and beta-D-fructose 6-phosphate from D-ribose 5-phosphate and D-xylulose 5-phosphate (non-oxidative stage): step 2/3. Its function is as follows. Transaldolase is important for the balance of metabolites in the pentose-phosphate pathway. The sequence is that of Probable transaldolase from Parabacteroides distasonis (strain ATCC 8503 / DSM 20701 / CIP 104284 / JCM 5825 / NCTC 11152).